The chain runs to 433 residues: Trigger factor (433 aa).

The region spanning 163 to 248 (GDVVVLDFAA…VHAVKERRLP (86 aa)) is the PPIase FKBP-type domain.

This sequence belongs to the FKBP-type PPIase family. Tig subfamily.

It is found in the cytoplasm. The enzyme catalyses [protein]-peptidylproline (omega=180) = [protein]-peptidylproline (omega=0). Its function is as follows. Involved in protein export. Acts as a chaperone by maintaining the newly synthesized protein in an open conformation. Functions as a peptidyl-prolyl cis-trans isomerase. The protein is Trigger factor of Nitratidesulfovibrio vulgaris (strain DP4) (Desulfovibrio vulgaris).